The primary structure comprises 290 residues: Small ribosomal subunit biogenesis GTPase RsgA (290 aa).

The CP-type G domain occupies 62–213 (KNSLVRPPIV…IADTPGFSSL (152 aa)). Residues 111–114 (SKLD) and 156–164 (GQTGVGKST) each bind GTP. 4 residues coordinate Zn(2+): cysteine 237, cysteine 242, histidine 244, and cysteine 250.

The protein belongs to the TRAFAC class YlqF/YawG GTPase family. RsgA subfamily. Monomer. Associates with 30S ribosomal subunit, binds 16S rRNA. It depends on Zn(2+) as a cofactor.

It localises to the cytoplasm. In terms of biological role, one of several proteins that assist in the late maturation steps of the functional core of the 30S ribosomal subunit. Helps release RbfA from mature subunits. May play a role in the assembly of ribosomal proteins into the subunit. Circularly permuted GTPase that catalyzes slow GTP hydrolysis, GTPase activity is stimulated by the 30S ribosomal subunit. In Streptococcus agalactiae serotype III (strain NEM316), this protein is Small ribosomal subunit biogenesis GTPase RsgA.